Reading from the N-terminus, the 361-residue chain is Cyclin-dependent kinase 10 (361 aa).

One can recognise a Protein kinase domain in the interval F37–F321. Residues I43–V51 and K66 contribute to the ATP site. Catalysis depends on D161, which acts as the Proton acceptor. T194 carries the phosphothreonine modification. The segment at L332–P361 is disordered.

The protein belongs to the protein kinase superfamily. CMGC Ser/Thr protein kinase family. CDC2/CDKX subfamily. In terms of assembly, heterodimer with CCNQ, the interaction is required for kinase activity. Interacts with ETS2. Interacts with PRK2.

It localises to the cytoplasm. Its subcellular location is the cytoskeleton. The protein resides in the cilium basal body. The enzyme catalyses L-seryl-[protein] + ATP = O-phospho-L-seryl-[protein] + ADP + H(+). The catalysed reaction is L-threonyl-[protein] + ATP = O-phospho-L-threonyl-[protein] + ADP + H(+). Its function is as follows. Cyclin-dependent kinase that phosphorylates the transcription factor ETS2 (in vitro) and positively controls its proteasomal degradation (in cells). Involved in the regulation of actin cytoskeleton organization through the phosphorylation of actin dynamics regulators such as PKN2. Is a negative regulator of ciliogenesis through phosphorylation of PKN2 and promotion of RhoA signaling. In Bos taurus (Bovine), this protein is Cyclin-dependent kinase 10 (CDK10).